The sequence spans 251 residues: Uroporphyrinogen-III C-methyltransferase (251 aa).

Residues proline 17, 93 to 95 (GGD), 123 to 124 (TS), methionine 177, and alanine 206 each bind S-adenosyl-L-homocysteine.

This sequence belongs to the precorrin methyltransferase family.

It localises to the plastid. Its subcellular location is the chloroplast. It catalyses the reaction uroporphyrinogen III + 2 S-adenosyl-L-methionine = precorrin-2 + 2 S-adenosyl-L-homocysteine + H(+). Its pathway is cofactor biosynthesis; adenosylcobalamin biosynthesis; precorrin-2 from uroporphyrinogen III: step 1/1. It participates in porphyrin-containing compound metabolism; siroheme biosynthesis; precorrin-2 from uroporphyrinogen III: step 1/1. In terms of biological role, catalyzes the two successive C-2 and C-7 methylation reactions involved in the conversion of uroporphyrinogen III to precorrin-2 via the intermediate formation of precorrin-1. It is a step in the biosynthesis of both cobalamin (vitamin B12) and siroheme. The sequence is that of Uroporphyrinogen-III C-methyltransferase (cobA) from Cyanidium caldarium (Red alga).